A 166-amino-acid chain; its full sequence is Phospholipase A2 inhibitor clone 11 (166 aa).

Residues 1–19 (MRLILLSGLLLLGIFLANG) form the signal peptide. In terms of domain architecture, C-type lectin spans 46 to 161 (LKGSFLIVHK…CDDNLLVVCE (116 aa)). 2 cysteine pairs are disulfide-bonded: Cys83-Cys160 and Cys138-Cys152. An N-linked (GlcNAc...) asparagine glycan is attached at Asn122.

It belongs to the alpha-type phospholipase A2 inhibitor family. In terms of assembly, homotrimer; non-covalently linked. As to expression, expressed by the liver.

Its subcellular location is the secreted. Its function is as follows. This phospholipase A2 inhibitor binds directly phospholipase A2 in the presence or absence of calcium. In Bothrops neuwiedi (Neuwied's lancehead), this protein is Phospholipase A2 inhibitor clone 11.